The following is a 363-amino-acid chain: UDP-N-acetylglucosamine--N-acetylmuramyl-(pentapeptide) pyrophosphoryl-undecaprenol N-acetylglucosamine transferase (363 aa).

UDP-N-acetyl-alpha-D-glucosamine is bound by residues 14–16, Asn122, Arg163, Ser190, and Gln285; that span reads TGG.

Belongs to the glycosyltransferase 28 family. MurG subfamily.

Its subcellular location is the cell inner membrane. It carries out the reaction di-trans,octa-cis-undecaprenyl diphospho-N-acetyl-alpha-D-muramoyl-L-alanyl-D-glutamyl-meso-2,6-diaminopimeloyl-D-alanyl-D-alanine + UDP-N-acetyl-alpha-D-glucosamine = di-trans,octa-cis-undecaprenyl diphospho-[N-acetyl-alpha-D-glucosaminyl-(1-&gt;4)]-N-acetyl-alpha-D-muramoyl-L-alanyl-D-glutamyl-meso-2,6-diaminopimeloyl-D-alanyl-D-alanine + UDP + H(+). Its pathway is cell wall biogenesis; peptidoglycan biosynthesis. Its function is as follows. Cell wall formation. Catalyzes the transfer of a GlcNAc subunit on undecaprenyl-pyrophosphoryl-MurNAc-pentapeptide (lipid intermediate I) to form undecaprenyl-pyrophosphoryl-MurNAc-(pentapeptide)GlcNAc (lipid intermediate II). This chain is UDP-N-acetylglucosamine--N-acetylmuramyl-(pentapeptide) pyrophosphoryl-undecaprenol N-acetylglucosamine transferase, found in Prochlorococcus marinus (strain AS9601).